The chain runs to 398 residues: Homeobox protein knotted-1-like 1 (398 aa).

3 disordered regions span residues 43–69, 172–192, and 234–277; these read TFHLQSSGGGGGGGSGDQCNFQSPGTH, EFEARQRSSGTSRETSKDPEL, and NNNA…PRAE. Over residues 49–58 the composition is skewed to gly residues; it reads SGGGGGGGSG. An ELK domain is found at 280–300; the sequence is ELKNHLLRKYSGYLSSLKQEL. Positions 301–364 form a DNA-binding region, homeobox; TALE-type; that stretch reads SKKKKKGKLP…NQRKRHWKPS (64 aa).

Belongs to the TALE/KNOX homeobox family. In terms of tissue distribution, expressed only in the stems.

Its subcellular location is the nucleus. Its function is as follows. Probably binds to the DNA sequence 5'-TGAC-3'. The sequence is that of Homeobox protein knotted-1-like 1 from Malus domestica (Apple).